A 345-amino-acid polypeptide reads, in one-letter code: 3-isopropylmalate dehydrogenase (345 aa).

Residue 74 to 87 coordinates NAD(+); that stretch reads GPKWDGLPRKIRPE. Arg-94, Arg-104, Arg-132, and Asp-217 together coordinate substrate. Mg(2+)-binding residues include Asp-217, Asp-241, and Asp-245. 274–286 lines the NAD(+) pocket; that stretch reads GSAPDIAGKGLAN.

This sequence belongs to the isocitrate and isopropylmalate dehydrogenases family. LeuB type 1 subfamily. Homodimer. The cofactor is Mg(2+). Mn(2+) serves as cofactor.

The protein localises to the cytoplasm. It catalyses the reaction (2R,3S)-3-isopropylmalate + NAD(+) = 4-methyl-2-oxopentanoate + CO2 + NADH. It participates in amino-acid biosynthesis; L-leucine biosynthesis; L-leucine from 3-methyl-2-oxobutanoate: step 3/4. Functionally, catalyzes the oxidation of 3-carboxy-2-hydroxy-4-methylpentanoate (3-isopropylmalate) to 3-carboxy-4-methyl-2-oxopentanoate. The product decarboxylates to 4-methyl-2 oxopentanoate. This Thermus thermophilus (strain ATCC BAA-163 / DSM 7039 / HB27) protein is 3-isopropylmalate dehydrogenase (leuB).